Consider the following 449-residue polypeptide: Phosphoglucosamine mutase (449 aa).

S100 functions as the Phosphoserine intermediate in the catalytic mechanism. The Mg(2+) site is built by S100, D241, D243, and D245. A Phosphoserine modification is found at S100.

The protein belongs to the phosphohexose mutase family. Mg(2+) serves as cofactor. In terms of processing, activated by phosphorylation.

The catalysed reaction is alpha-D-glucosamine 1-phosphate = D-glucosamine 6-phosphate. Its function is as follows. Catalyzes the conversion of glucosamine-6-phosphate to glucosamine-1-phosphate. This is Phosphoglucosamine mutase from Clostridium botulinum (strain Loch Maree / Type A3).